Consider the following 79-residue polypeptide: RNA-binding protein Hfq (79 aa).

Positions 10-69 (DPFLNALRKEHVPVSIYLVNGIKLQGNIESFDQYVVLLRNTVTQMVYKHAISTVVPARPV) constitute a Sm domain.

It belongs to the Hfq family. As to quaternary structure, homohexamer.

Its function is as follows. RNA chaperone that binds small regulatory RNA (sRNAs) and mRNAs to facilitate mRNA translational regulation in response to envelope stress, environmental stress and changes in metabolite concentrations. Also binds with high specificity to tRNAs. The chain is RNA-binding protein Hfq from Burkholderia mallei (strain ATCC 23344).